A 454-amino-acid chain; its full sequence is Bifunctional protein GlmU (454 aa).

The pyrophosphorylase stretch occupies residues Met-1–Lys-225. UDP-N-acetyl-alpha-D-glucosamine-binding positions include Leu-6 to Gly-9, Lys-20, Gln-71, Gly-76 to Thr-77, Tyr-98 to Asp-100, Gly-135, Glu-150, Asn-165, and Asn-223. Residue Asp-100 coordinates Mg(2+). Position 223 (Asn-223) interacts with Mg(2+). A linker region spans residues Val-226 to Thr-246. Residues Gly-247–Gln-454 form an N-acetyltransferase region. Positions 329 and 347 each coordinate UDP-N-acetyl-alpha-D-glucosamine. Catalysis depends on His-359, which acts as the Proton acceptor. Residues Tyr-362 and Asn-373 each coordinate UDP-N-acetyl-alpha-D-glucosamine. Acetyl-CoA-binding positions include Ala-376, Asn-382–Tyr-383, Ser-401, Ala-419, and Arg-436.

In the N-terminal section; belongs to the N-acetylglucosamine-1-phosphate uridyltransferase family. It in the C-terminal section; belongs to the transferase hexapeptide repeat family. In terms of assembly, homotrimer. The cofactor is Mg(2+).

It is found in the cytoplasm. It catalyses the reaction alpha-D-glucosamine 1-phosphate + acetyl-CoA = N-acetyl-alpha-D-glucosamine 1-phosphate + CoA + H(+). It carries out the reaction N-acetyl-alpha-D-glucosamine 1-phosphate + UTP + H(+) = UDP-N-acetyl-alpha-D-glucosamine + diphosphate. It participates in nucleotide-sugar biosynthesis; UDP-N-acetyl-alpha-D-glucosamine biosynthesis; N-acetyl-alpha-D-glucosamine 1-phosphate from alpha-D-glucosamine 6-phosphate (route II): step 2/2. Its pathway is nucleotide-sugar biosynthesis; UDP-N-acetyl-alpha-D-glucosamine biosynthesis; UDP-N-acetyl-alpha-D-glucosamine from N-acetyl-alpha-D-glucosamine 1-phosphate: step 1/1. It functions in the pathway bacterial outer membrane biogenesis; LPS lipid A biosynthesis. Catalyzes the last two sequential reactions in the de novo biosynthetic pathway for UDP-N-acetylglucosamine (UDP-GlcNAc). The C-terminal domain catalyzes the transfer of acetyl group from acetyl coenzyme A to glucosamine-1-phosphate (GlcN-1-P) to produce N-acetylglucosamine-1-phosphate (GlcNAc-1-P), which is converted into UDP-GlcNAc by the transfer of uridine 5-monophosphate (from uridine 5-triphosphate), a reaction catalyzed by the N-terminal domain. This is Bifunctional protein GlmU from Cupriavidus pinatubonensis (strain JMP 134 / LMG 1197) (Cupriavidus necator (strain JMP 134)).